Consider the following 254-residue polypeptide: Small ribosomal subunit protein uS2 (254 aa).

The protein belongs to the universal ribosomal protein uS2 family.

The polypeptide is Small ribosomal subunit protein uS2 (Borrelia hermsii (strain HS1 / DAH)).